The following is a 422-amino-acid chain: E3 ubiquitin-protein ligase CBLL2 (422 aa).

The RING-type zinc-finger motif lies at 54–94; it reads CDKCDLPIKIYGRIIPCKHAFCYNCANLYDKIGYKICPRCS. Positions 93 to 151 are HYB domain; it reads CSYPVLRIEEHKRGSVFMCSVVQGCKRTYLSQKSLQAHIKRRHKRARKQVASASLEKLR. A C2H2-type zinc finger spans residues 109–135; the sequence is FMCSVVQGCKRTYLSQKSLQAHIKRRH. Disordered regions lie at residues 190 to 213 and 378 to 422; these read MQQM…PELS and QTDA…HRPY. Positions 195–205 are enriched in basic and acidic residues; sequence HEQHNQPHKDL. The segment covering 393–405 has biased composition (pro residues); it reads LPPPPPTWSPPPS. Basic residues predominate over residues 410 to 422; sequence GSHHSYQRRHRPY.

As to quaternary structure, homodimer.

The protein localises to the cytoplasm. It carries out the reaction S-ubiquitinyl-[E2 ubiquitin-conjugating enzyme]-L-cysteine + [acceptor protein]-L-lysine = [E2 ubiquitin-conjugating enzyme]-L-cysteine + N(6)-ubiquitinyl-[acceptor protein]-L-lysine.. It participates in protein modification; protein ubiquitination. E3 ubiquitin ligase catalyzing the covalent attachment of ubiquitin moieties onto substrate proteins. May operate on tyrosine-phosphorylated SRC substrates. The polypeptide is E3 ubiquitin-protein ligase CBLL2 (CBLL2) (Macaca fascicularis (Crab-eating macaque)).